The following is a 442-amino-acid chain: Methylenetetrahydrofolate--tRNA-(uracil-5-)-methyltransferase TrmFO 1 (442 aa).

9-14 contributes to the FAD binding site; the sequence is GAGLAG.

Belongs to the MnmG family. TrmFO subfamily. Requires FAD as cofactor.

It localises to the cytoplasm. It carries out the reaction uridine(54) in tRNA + (6R)-5,10-methylene-5,6,7,8-tetrahydrofolate + NADH + H(+) = 5-methyluridine(54) in tRNA + (6S)-5,6,7,8-tetrahydrofolate + NAD(+). The catalysed reaction is uridine(54) in tRNA + (6R)-5,10-methylene-5,6,7,8-tetrahydrofolate + NADPH + H(+) = 5-methyluridine(54) in tRNA + (6S)-5,6,7,8-tetrahydrofolate + NADP(+). Catalyzes the folate-dependent formation of 5-methyl-uridine at position 54 (M-5-U54) in all tRNAs. The protein is Methylenetetrahydrofolate--tRNA-(uracil-5-)-methyltransferase TrmFO 1 of Mesoplasma florum (strain ATCC 33453 / NBRC 100688 / NCTC 11704 / L1) (Acholeplasma florum).